Here is an 835-residue protein sequence, read N- to C-terminus: Protein translocase subunit SecA (835 aa).

ATP contacts are provided by residues Q85, 103-107 (GEGKT), and D492. C819, C821, C830, and C831 together coordinate Zn(2+).

The protein belongs to the SecA family. In terms of assembly, monomer and homodimer. Part of the essential Sec protein translocation apparatus which comprises SecA, SecYEG and auxiliary proteins SecDF. Other proteins may also be involved. It depends on Zn(2+) as a cofactor.

The protein localises to the cell membrane. It is found in the cytoplasm. It catalyses the reaction ATP + H2O + cellular proteinSide 1 = ADP + phosphate + cellular proteinSide 2.. In terms of biological role, part of the Sec protein translocase complex. Interacts with the SecYEG preprotein conducting channel. Has a central role in coupling the hydrolysis of ATP to the transfer of proteins into and across the cell membrane, serving as an ATP-driven molecular motor driving the stepwise translocation of polypeptide chains across the membrane. The polypeptide is Protein translocase subunit SecA (Clostridium botulinum (strain Loch Maree / Type A3)).